A 345-amino-acid polypeptide reads, in one-letter code: Sesquiterpene synthase GALMADRAFT_104215 (345 aa).

Residues D91, N226, S230, and E234 each coordinate Mg(2+). The short motif at 91–95 (DEFTD) is the DDXXD motif element. R316 and Y317 together coordinate (2E,6E)-farnesyl diphosphate.

This sequence belongs to the terpene synthase family. Mg(2+) serves as cofactor.

The enzyme catalyses (2E,6E)-farnesyl diphosphate = beta-gurjunene + diphosphate. Its function is as follows. Terpene cyclase that catalyzes the cyclization of farnesyl diphosphate (FPP) to beta-gurjunene. The protein is Sesquiterpene synthase GALMADRAFT_104215 of Galerina marginata (strain CBS 339.88).